The sequence spans 330 residues: Zinc finger protein Gfi-1b (330 aa).

Residues 1–20 form an SNAG domain region; sequence MPRSFLVKSKKAHTYHQPRV. Residues 1–42 are disordered; that stretch reads MPRSFLVKSKKAHTYHQPRVQEDEPLWPPALTPVPRDQAPSN. Lys-8 carries the N6,N6-dimethyllysine modification. The interval 91–330 is interaction with ARIH2; sequence GDSPLSDSPP…RHRESQHNLK (240 aa). 6 consecutive C2H2-type zinc fingers follow at residues 163 to 186, 192 to 214, 220 to 242, 248 to 270, 276 to 298, and 304 to 327; these read YHCV…RRSH, FACD…THVH, FECR…LLIH, YPCQ…TYIH, HKCQ…SRKH, and FSCE…ESQH. Positions 164–330 are mediates interaction with GATA1; that stretch reads HCVKCNKVFS…RHRESQHNLK (167 aa).

Component of a RCOR-GFI-KDM1A-HDAC complex. Interacts directly with RCOR1, KDM1A and HDAC2. Forms a complex with GATA1. Interacts with histone methyltransferases EHMT2 and SUV39H1. Interacts with ARIH2 (via RING-type 2). Interacts with RUNX1T1. Methylation at Lys-8 in the SNAG domain seems required for the recruitment of the corepressor complex. In terms of tissue distribution, expressed in bone marrow and fetal liver, but also detectable in fetal spleen, fetal thymus, and testes. Detected in hematopoietic stem cells, erythroblasts, and megakaryocytes. Overexpressed in bone marrow of patients with erythroleukemia and megakaryocytic leukemia as well as in their corresponding leukemic cell lines, and markedly repressed in severe aplastic anemia (SAA).

The protein localises to the nucleus. Essential proto-oncogenic transcriptional regulator necessary for development and differentiation of erythroid and megakaryocytic lineages. Component of a RCOR-GFI-KDM1A-HDAC complex that suppresses, via histone deacetylase (HDAC) recruitment, a number of genes implicated in multilineage blood cell development and controls hematopoietic differentiation. Transcriptional repressor or activator depending on both promoter and cell type context; represses promoter activity of SOCS1 and SOCS3 and thus, may regulate cytokine signaling pathways. Cooperates with GATA1 to repress target gene transcription, such as the apoptosis regulator BCL2L1; GFI1B silencing in leukemic cell lines markedly increase apoptosis rate. Inhibits down-regulation of MYC and MYB as well as the cyclin-dependent kinase inhibitor CDKN1A/P21WAF1 in IL6-treated myelomonocytic cells. Represses expression of GATA3 in T-cell lymphomas and inhibits GATA1-mediated transcription; as GATA1 also mediates erythroid GFI1B transcription, both GATA1 and GFI1B participate in a feedback regulatory pathway controlling the expression of GFI1B gene in erythroid cells. Suppresses GATA1-mediated stimulation of GFI1B promoter through protein interaction. Binds to gamma-satellite DNA and to its own promoter, auto-repressing its own expression. Alters histone methylation by recruiting histone methyltransferase to target genes promoters. Plays a role in heterochromatin formation. This chain is Zinc finger protein Gfi-1b (GFI1B), found in Homo sapiens (Human).